The chain runs to 254 residues: Proteasome activator complex subunit 3 (254 aa).

2 positions are modified to N6-acetyllysine: lysine 6 and lysine 14. Lysine 195 is subject to N6-acetyllysine; by P300/CBP.

In terms of assembly, homoheptamer. In terms of processing, acetylation at the major site Lys-195 is important for oligomerization and ability to degrade its target substrates. Deacetylated by SIRT1.

In terms of biological role, implicated in immunoproteasome assembly and required for efficient antigen processing. The PA28 activator complex enhances the generation of class I binding peptides by altering the cleavage pattern of the proteasome. The polypeptide is Proteasome activator complex subunit 3 (Gallus gallus (Chicken)).